Consider the following 265-residue polypeptide: F-box only protein 6 (265 aa).

Positions 3–50 (LVSINQLPENILLEVFMHVPARQLLRNCRPVCCLWRDLIDLVSLWKRK) constitute an F-box domain. The FBA domain maps to 71–252 (FYFLCSLRRN…VTNSSVVISH (182 aa)). Phosphoserine is present on Ser-251.

In terms of assembly, part of a SCF (SKP1-cullin-F-box) protein ligase complex. Interacts with VCP, CHEK1 and CUL1.

It localises to the cytoplasm. It participates in protein modification; protein ubiquitination. Substrate-recognition component of some SCF (SKP1-CUL1-F-box protein)-type E3 ubiquitin ligase complexes. Involved in endoplasmic reticulum-associated degradation pathway (ERAD) for misfolded lumenal proteins by recognizing and binding sugar chains on unfolded glycoproteins that are retrotranslocated into the cytosol and promoting their ubiquitination and subsequent degradation. Able to recognize and bind denatured glycoproteins, which are modified with not only high-mannose but also complex-type oligosaccharides. Also recognizes sulfated glycans. Also involved in DNA damage response by specifically recognizing activated CHEK1 (phosphorylated on 'Ser-345'), promoting its ubiquitination and degradation. Ubiquitination of CHEK1 is required to ensure that activated CHEK1 does not accumulate as cells progress through S phase, or when replication forks encounter transient impediments during normal DNA replication. This Bos taurus (Bovine) protein is F-box only protein 6 (FBXO6).